The sequence spans 159 residues: 6,7-dimethyl-8-ribityllumazine synthase (159 aa).

Residues tryptophan 26, 58-60 (SFE), and 80-82 (VVI) each bind 5-amino-6-(D-ribitylamino)uracil. 85 to 86 (GT) contributes to the (2S)-2-hydroxy-3-oxobutyl phosphate binding site. Residue histidine 88 is the Proton donor of the active site. Position 113 (phenylalanine 113) interacts with 5-amino-6-(D-ribitylamino)uracil. Residue arginine 127 participates in (2S)-2-hydroxy-3-oxobutyl phosphate binding.

The protein belongs to the DMRL synthase family.

It carries out the reaction (2S)-2-hydroxy-3-oxobutyl phosphate + 5-amino-6-(D-ribitylamino)uracil = 6,7-dimethyl-8-(1-D-ribityl)lumazine + phosphate + 2 H2O + H(+). It participates in cofactor biosynthesis; riboflavin biosynthesis; riboflavin from 2-hydroxy-3-oxobutyl phosphate and 5-amino-6-(D-ribitylamino)uracil: step 1/2. Catalyzes the formation of 6,7-dimethyl-8-ribityllumazine by condensation of 5-amino-6-(D-ribitylamino)uracil with 3,4-dihydroxy-2-butanone 4-phosphate. This is the penultimate step in the biosynthesis of riboflavin. The chain is 6,7-dimethyl-8-ribityllumazine synthase from Renibacterium salmoninarum (strain ATCC 33209 / DSM 20767 / JCM 11484 / NBRC 15589 / NCIMB 2235).